The following is a 211-amino-acid chain: MAHTKTRRTYGFLMVLLILGSACGNLVASGSAGSPPSNEPGGGGLSEQVVLDQLSESDLYGNNKRAWQSLQSSWGKRSSSGDVSDPDIYMTGHFVPLVITDGTNTIDWDTFERLASGQSAQQQQQQPLQQQSQSGEDFDDLAGEPDVEKRAWKSMNVAWGKRRQAQGWNKFRGAWGKREPTWNNLKGMWGKRDQWQKLHGGWGKRSQLPSN.

Positions 1-24 (MAHTKTRRTYGFLMVLLILGSACG) are cleaved as a signal peptide. The propeptide occupies 25–63 (NLVASGSAGSPPSNEPGGGGLSEQVVLDQLSESDLYGNN). Trp-74 bears the Tryptophan amide mark. The propeptide occupies 78 to 148 (SSSGDVSDPD…DDLAGEPDVE (71 aa)). A compositionally biased stretch (low complexity) spans 115–135 (ASGQSAQQQQQQPLQQQSQSG). Residues 115–142 (ASGQSAQQQQQQPLQQQSQSGEDFDDLA) form a disordered region. Tryptophan amide occurs at positions 159, 175, 189, and 202. Residues 168–190 (WNKFRGAWGKREPTWNNLKGMWG) form a disordered region. Residues 206–211 (SQLPSN) constitute a propeptide that is removed on maturation.

In terms of tissue distribution, in larvae, strongly expressed in the midgut region before and in between the copper cells, and in a group of cells in the posterior part of the larval midgut. Expressed in the neurons of many areas including the subesophageal ganglion/tritocerebrum (SOG), olfactory glomeruli, lateral ventral protocerebrum, mushroom body, the optic lobe medulla and in the antennal lobes.

The protein resides in the secreted. Ligand for the sex peptide receptor (SPR). Stabilizes sleep and maintains sleep homeostasis to inhibit the activity of wake-promoting circuits, such as those that involve the pigment dispersing factor (pdf) neurons. Regulated by the circadian clock network and pathways associated with a sleep homeostat. May also have a regulatory role in gut motility. This Drosophila melanogaster (Fruit fly) protein is Allatostatins MIP (Mip).